A 170-amino-acid chain; its full sequence is Cilia- and flagella-associated protein 276 (170 aa).

2 disordered regions span residues 1-37 (MPLT…PTHL) and 151-170 (HTAA…FFST).

Microtubule inner protein component of sperm flagellar doublet microtubules. In terms of tissue distribution, expressed in trachea multiciliated cells.

The protein resides in the cytoplasm. It is found in the cytoskeleton. Its subcellular location is the cilium axoneme. The protein localises to the flagellum axoneme. Microtubule inner protein (MIP) part of the dynein-decorated doublet microtubules (DMTs) in cilia axoneme, which is required for motile cilia beating. May play an important role for the maintenance of myelin-axon integrity. May affect intracellular Ca(2+) homeostasis. This Bos taurus (Bovine) protein is Cilia- and flagella-associated protein 276.